The following is a 435-amino-acid chain: Keratin, type I cytoskeletal 18 (435 aa).

Residues 1–28 are compositionally biased toward low complexity; that stretch reads MSLRSSYSVRSSTSQVPVSQMSQMSQMS. The tract at residues 1–36 is disordered; the sequence is MSLRSSYSVRSSTSQVPVSQMSQMSQMSIKRTTNVP. Positions 2 to 88 are head; sequence SLRSSYSVRS…TGATGDIMGN (87 aa). Residues 89–123 are coil 1A; sequence EKMAMQNLNDRLASYLRSETLEQANSKLELKIREA. The region spanning 89-399 is the IF rod domain; the sequence is EKMAMQNLND…RLLDGGDFKL (311 aa). A linker 1 region spans residues 124–140; sequence LEKKGPEVCDYSRFQPI. The tract at residues 141 to 232 is coil 1B; that stretch reads IDDLRRKIFD…KNHDNEVMEL (92 aa). Residues 233–256 form a linker 12 region; sequence RNQISHSGVQVDVDAPKGQDLAKI. The coil 2 stretch occupies residues 257-394; it reads MEEIRSKYEK…IATYRRLLDG (138 aa). Residues 395-435 are tail; it reads GDFKLQDALEEQKRVKVMTVTQTLVDGKVVSSSTETKEKKF.

This sequence belongs to the intermediate filament family. Heterotetramer of two type I and two type II keratins. Keratin-18 associates with keratin-8. Phosphorylated. In terms of processing, proteolytically cleaved by caspases during epithelial cell apoptosis. As to expression, abundantly expressed in an even distribution throughout the optic nerve, localizing specifically to the astrocyte domains. Moderately expressed in spinal cord, brain, liver and oocytes.

In terms of biological role, when phosphorylated, plays a role in filament reorganization. The chain is Keratin, type I cytoskeletal 18 (krt18) from Carassius auratus (Goldfish).